Consider the following 535-residue polypeptide: Glutamate--cysteine ligase (535 aa).

The protein belongs to the glutamate--cysteine ligase type 1 family. Type 1 subfamily.

It carries out the reaction L-cysteine + L-glutamate + ATP = gamma-L-glutamyl-L-cysteine + ADP + phosphate + H(+). It participates in sulfur metabolism; glutathione biosynthesis; glutathione from L-cysteine and L-glutamate: step 1/2. In Pseudomonas syringae pv. syringae, this protein is Glutamate--cysteine ligase.